We begin with the raw amino-acid sequence, 213 residues long: Thiamine-phosphate synthase (213 aa).

4-amino-2-methyl-5-(diphosphooxymethyl)pyrimidine-binding positions include 41 to 45 and Asn-73; that span reads QFRVK. Mg(2+) is bound by residues Asp-74 and Asp-93. Thr-112 serves as a coordination point for 4-amino-2-methyl-5-(diphosphooxymethyl)pyrimidine. 139–141 contributes to the 2-[(2R,5Z)-2-carboxy-4-methylthiazol-5(2H)-ylidene]ethyl phosphate binding site; it reads SAT. Position 142 (Lys-142) interacts with 4-amino-2-methyl-5-(diphosphooxymethyl)pyrimidine. Gly-171 is a binding site for 2-[(2R,5Z)-2-carboxy-4-methylthiazol-5(2H)-ylidene]ethyl phosphate.

This sequence belongs to the thiamine-phosphate synthase family. The cofactor is Mg(2+).

It carries out the reaction 2-[(2R,5Z)-2-carboxy-4-methylthiazol-5(2H)-ylidene]ethyl phosphate + 4-amino-2-methyl-5-(diphosphooxymethyl)pyrimidine + 2 H(+) = thiamine phosphate + CO2 + diphosphate. It catalyses the reaction 2-(2-carboxy-4-methylthiazol-5-yl)ethyl phosphate + 4-amino-2-methyl-5-(diphosphooxymethyl)pyrimidine + 2 H(+) = thiamine phosphate + CO2 + diphosphate. The catalysed reaction is 4-methyl-5-(2-phosphooxyethyl)-thiazole + 4-amino-2-methyl-5-(diphosphooxymethyl)pyrimidine + H(+) = thiamine phosphate + diphosphate. It participates in cofactor biosynthesis; thiamine diphosphate biosynthesis; thiamine phosphate from 4-amino-2-methyl-5-diphosphomethylpyrimidine and 4-methyl-5-(2-phosphoethyl)-thiazole: step 1/1. Its function is as follows. Condenses 4-methyl-5-(beta-hydroxyethyl)thiazole monophosphate (THZ-P) and 2-methyl-4-amino-5-hydroxymethyl pyrimidine pyrophosphate (HMP-PP) to form thiamine monophosphate (TMP). This is Thiamine-phosphate synthase from Erythrobacter litoralis (strain HTCC2594).